The following is an 850-amino-acid chain: MVMADTIATGDKTSQFDGKHMQDLERIYSTRDTLDDNFFGERGQKDANGDYYDELNNEETNYSGSSYYGHSDDSEVVGLIKNDTVSQLPPLDSFIFPDSRALFLLDLGNYADLTYEEIIVHGFEIYIVEQWVACRNLSTLITSYTGNSQDTISGVRVVLPKDTSMWPGRFRLYFEELMEFARPKFTPKGTLFITNLSGVSFGLNLLHVECGDLRTIWKDFEVNFDLKNLHCGGRSANLLCPPTMASLDKFSQLFKIPTNGFIAQYPQMIQQQQPRLPEEEYKTVGNSKCRNTDSKSPVVEMVTLIQISLSYFNLLSKNYQTDGLLCEDTKRAIDEWWETYGKLYLGTEKPRNECTLGPTTVAGLISLILCCYFKLMIENCISSKDPFDEAGFFQGIYNFQKKHGLNKRKSRVYLDPRTLEKLFEVTAKVSSKDIFKLKKMVTSTVQDIIGKGNPINLSHKILTTDLDTLIHNIHGGSVGLLWKGKGHPRKCCTDISNEEFLKFNYQRGDPDGQIREREMLLEKFRLERIAYAQKHASKKVSSSSLDTSEDIGRTNAMPSSATVSSMFPNYDNTKYAYNFGINKLYQGEYYRRNSFPYCKDRTHDNIYEDLSELKEKSSRLYRCNSSSAVQNIVEKWDLPFDPSVVRIARDLLRMKYDIQAQQHIQEMDEHYMGKLNKEGTVGQYSKFNERYKRLQELYKKYSDGAKVFEGRFEDIDNKQQLLLHEMQELNSLSSRLKYDMRILEVRVRDIESSVAQFDSKLIGLKSSLQGQGKTGICSAIDPKSDKDEYDRCVNDLMTTNNPTYEALCLKMLSRRYFKDLKNDTVGWFRWLFGNNSLHNNASEDDRGIRV.

A phosphoserine mark is found at Ser-594 and Ser-625.

The protein to yeast STB6. In terms of assembly, interacts with SIN3.

The sequence is that of Protein STB2 (STB2) from Saccharomyces cerevisiae (strain ATCC 204508 / S288c) (Baker's yeast).